Consider the following 391-residue polypeptide: Casein kinase II subunit alpha (391 aa).

Positions 36–41 (QDDYQL) are interaction with beta subunit. Residues 39–324 (YQLVRKLGRG…AREAMEHPYF (286 aa)) enclose the Protein kinase domain. Residues 45-53 (LGRGKYSEV) and K68 contribute to the ATP site. The active-site Proton acceptor is D156. Phosphothreonine; by CDK1 occurs at positions 344 and 360. Residues S362 and S370 each carry the phosphoserine; by CDK1 modification.

This sequence belongs to the protein kinase superfamily. Ser/Thr protein kinase family. CK2 subfamily. As to quaternary structure, heterotetramer composed of two catalytic subunits (alpha chain and/or alpha' chain) and two regulatory subunits (beta chains). The tetramer can exist as a combination of 2 alpha/2 beta, 2 alpha'/2 beta or 1 alpha/1 alpha'/2 beta subunits. Also part of a CK2-SPT16-SSRP1 complex composed of SSRP1, SUPT16H, CSNK2A1, CSNK2A2 and CSNK2B, which forms following UV irradiation. Interacts with RNPS1. Interacts with SNAI1. Interacts with PML. Interacts with CCAR2. Interacts with HIRIP3. In terms of processing, phosphorylated at Thr-344, Thr-360, Ser-362 and Ser-370 by CDK1 in prophase and metaphase and dephosphorylated during anaphase. Phosphorylation does not directly affect casein kinase 2 activity, but may contribute to its regulation by forming binding sites for interacting proteins and/or targeting it to different compartments.

The protein resides in the nucleus. The catalysed reaction is L-seryl-[protein] + ATP = O-phospho-L-seryl-[protein] + ADP + H(+). The enzyme catalyses L-threonyl-[protein] + ATP = O-phospho-L-threonyl-[protein] + ADP + H(+). Constitutively active protein kinase whose activity is not directly affected by phosphorylation. Seems to be regulated by level of expression and localization. In terms of biological role, catalytic subunit of a constitutively active serine/threonine-protein kinase complex that phosphorylates a large number of substrates containing acidic residues C-terminal to the phosphorylated serine or threonine. Regulates numerous cellular processes, such as cell cycle progression, apoptosis and transcription, as well as viral infection. May act as a regulatory node which integrates and coordinates numerous signals leading to an appropriate cellular response. During mitosis, functions as a component of the p53/TP53-dependent spindle assembly checkpoint (SAC) that maintains cyclin-B-CDK1 activity and G2 arrest in response to spindle damage. Also required for p53/TP53-mediated apoptosis, phosphorylating 'Ser-392' of p53/TP53 following UV irradiation. Phosphorylates a number of DNA repair proteins in response to DNA damage, such as MDC1, MRE11, RAD9A, RAD51 and HTATSF1, promoting their recruitment to DNA damage sites. Can also negatively regulate apoptosis. Phosphorylates the caspases CASP9 and CASP2 and the apoptotic regulator NOL3. Phosphorylation protects CASP9 from cleavage and activation by CASP8, and inhibits the dimerization of CASP2 and activation of CASP8. Phosphorylates YY1, protecting YY1 from cleavage by CASP7 during apoptosis. Regulates transcription by direct phosphorylation of RNA polymerases I, II, III and IV. Also phosphorylates and regulates numerous transcription factors including NF-kappa-B, STAT1, CREB1, IRF1, IRF2, ATF1, ATF4, SRF, MAX, JUN, FOS, MYC and MYB. Phosphorylates Hsp90 and its co-chaperones FKBP4 and CDC37, which is essential for chaperone function. Mediates sequential phosphorylation of FNIP1, promoting its gradual interaction with Hsp90, leading to activate both kinase and non-kinase client proteins of Hsp90. Regulates Wnt signaling by phosphorylating CTNNB1 and the transcription factor LEF1. Acts as an ectokinase that phosphorylates several extracellular proteins. Plays an important role in the circadian clock function by phosphorylating BMAL1 at 'Ser-90' which is pivotal for its interaction with CLOCK and which controls CLOCK nuclear entry. Phosphorylates FMR1, promoting FMR1-dependent formation of a membraneless compartment. May phosphorylate histone H2A on 'Ser-1'. The chain is Casein kinase II subunit alpha (CSNK2A1) from Bos taurus (Bovine).